The primary structure comprises 156 residues: ATP synthase subunit b (156 aa).

A helical transmembrane segment spans residues 7–29 (LFAQMVVFLVLAWFTMKFVWPPL).

This sequence belongs to the ATPase B chain family. In terms of assembly, F-type ATPases have 2 components, F(1) - the catalytic core - and F(0) - the membrane proton channel. F(1) has five subunits: alpha(3), beta(3), gamma(1), delta(1), epsilon(1). F(0) has three main subunits: a(1), b(2) and c(10-14). The alpha and beta chains form an alternating ring which encloses part of the gamma chain. F(1) is attached to F(0) by a central stalk formed by the gamma and epsilon chains, while a peripheral stalk is formed by the delta and b chains.

The protein resides in the cell inner membrane. F(1)F(0) ATP synthase produces ATP from ADP in the presence of a proton or sodium gradient. F-type ATPases consist of two structural domains, F(1) containing the extramembraneous catalytic core and F(0) containing the membrane proton channel, linked together by a central stalk and a peripheral stalk. During catalysis, ATP synthesis in the catalytic domain of F(1) is coupled via a rotary mechanism of the central stalk subunits to proton translocation. Its function is as follows. Component of the F(0) channel, it forms part of the peripheral stalk, linking F(1) to F(0). This Burkholderia ambifaria (strain MC40-6) protein is ATP synthase subunit b.